A 255-amino-acid chain; its full sequence is Acetyl-coenzyme A carboxylase carboxyl transferase subunit alpha (255 aa).

The region spanning 1–235 is the CoA carboxyltransferase C-terminal domain; sequence MNIAKIVREA…KKELQTELAR (235 aa).

The protein belongs to the AccA family. In terms of assembly, acetyl-CoA carboxylase is a heterohexamer composed of biotin carboxyl carrier protein (AccB), biotin carboxylase (AccC) and two subunits each of ACCase subunit alpha (AccA) and ACCase subunit beta (AccD).

The protein resides in the cytoplasm. The enzyme catalyses N(6)-carboxybiotinyl-L-lysyl-[protein] + acetyl-CoA = N(6)-biotinyl-L-lysyl-[protein] + malonyl-CoA. Its pathway is lipid metabolism; malonyl-CoA biosynthesis; malonyl-CoA from acetyl-CoA: step 1/1. Component of the acetyl coenzyme A carboxylase (ACC) complex. First, biotin carboxylase catalyzes the carboxylation of biotin on its carrier protein (BCCP) and then the CO(2) group is transferred by the carboxyltransferase to acetyl-CoA to form malonyl-CoA. The sequence is that of Acetyl-coenzyme A carboxylase carboxyl transferase subunit alpha from Streptococcus pneumoniae (strain CGSP14).